The chain runs to 429 residues: Glutamate-1-semialdehyde 2,1-aminomutase 2 (429 aa).

N6-(pyridoxal phosphate)lysine is present on K268.

Belongs to the class-III pyridoxal-phosphate-dependent aminotransferase family. HemL subfamily. Homodimer. It depends on pyridoxal 5'-phosphate as a cofactor.

The protein localises to the cytoplasm. The catalysed reaction is (S)-4-amino-5-oxopentanoate = 5-aminolevulinate. Its pathway is porphyrin-containing compound metabolism; protoporphyrin-IX biosynthesis; 5-aminolevulinate from L-glutamyl-tRNA(Glu): step 2/2. The sequence is that of Glutamate-1-semialdehyde 2,1-aminomutase 2 from Bacillus cereus (strain AH187).